We begin with the raw amino-acid sequence, 223 residues long: Shematrin-like protein 2 (223 aa).

Positions 1–19 (MRILANLILLGVLFGVCLC) are cleaved as a signal peptide.

As to expression, prismatic layer of shell (at protein level).

The protein resides in the secreted. This chain is Shematrin-like protein 2, found in Margaritifera margaritifera (Freshwater pearl mussel).